We begin with the raw amino-acid sequence, 308 residues long: tRNA dimethylallyltransferase (308 aa).

Position 14-21 (14-21) interacts with ATP; the sequence is GPTASGKT. Position 16–21 (16–21) interacts with substrate; it reads TASGKT. Interaction with substrate tRNA regions lie at residues 39 to 42, 163 to 167, and 244 to 249; these read DSAL, QRLAR, and RCVGYR.

Belongs to the IPP transferase family. In terms of assembly, monomer. Mg(2+) is required as a cofactor.

It catalyses the reaction adenosine(37) in tRNA + dimethylallyl diphosphate = N(6)-dimethylallyladenosine(37) in tRNA + diphosphate. In terms of biological role, catalyzes the transfer of a dimethylallyl group onto the adenine at position 37 in tRNAs that read codons beginning with uridine, leading to the formation of N6-(dimethylallyl)adenosine (i(6)A). This is tRNA dimethylallyltransferase from Shewanella piezotolerans (strain WP3 / JCM 13877).